The chain runs to 177 residues: Large ribosomal subunit protein uL6 (177 aa).

Belongs to the universal ribosomal protein uL6 family. In terms of assembly, part of the 50S ribosomal subunit.

Functionally, this protein binds to the 23S rRNA, and is important in its secondary structure. It is located near the subunit interface in the base of the L7/L12 stalk, and near the tRNA binding site of the peptidyltransferase center. In Salmonella newport (strain SL254), this protein is Large ribosomal subunit protein uL6.